The following is a 509-amino-acid chain: Putative Rieske 2Fe-2S iron-sulfur protein YhfW (509 aa).

The region spanning Lys-423 to Asp-509 is the Rieske domain. Residues Cys-463, His-465, Cys-481, and His-484 each coordinate [2Fe-2S] cluster. A disulfide bond links Cys-468 and Cys-483.

Belongs to the Rieske iron-sulfur protein family. [2Fe-2S] cluster is required as a cofactor.

In Bacillus subtilis (strain 168), this protein is Putative Rieske 2Fe-2S iron-sulfur protein YhfW (yhfW).